The sequence spans 118 residues: MARVKTGVVRRRRHKKVLKLARGFFSARHKHFRKAKEQLERSLVYAYRDRRQKKRDFRRLWIVRINAACRLNDLSYSRFMNGLKKANIELDRKILADLAMNDAKAFAALAKQAKDALK.

This sequence belongs to the bacterial ribosomal protein bL20 family.

Its function is as follows. Binds directly to 23S ribosomal RNA and is necessary for the in vitro assembly process of the 50S ribosomal subunit. It is not involved in the protein synthesizing functions of that subunit. In Campylobacter curvus (strain 525.92), this protein is Large ribosomal subunit protein bL20.